Here is a 494-residue protein sequence, read N- to C-terminus: Glycerol kinase (494 aa).

ADP is bound at residue Thr-13. Residues Thr-13, Thr-14, and Ser-15 each coordinate ATP. A sn-glycerol 3-phosphate-binding site is contributed by Thr-13. Arg-17 serves as a coordination point for ADP. 4 residues coordinate sn-glycerol 3-phosphate: Arg-83, Glu-84, Tyr-135, and Asp-244. Glycerol contacts are provided by Arg-83, Glu-84, Tyr-135, Asp-244, and Gln-245. ADP is bound by residues Thr-266 and Gly-309. Residues Thr-266, Gly-309, Gln-313, and Gly-410 each contribute to the ATP site. The ADP site is built by Gly-410 and Asn-414.

It belongs to the FGGY kinase family.

It carries out the reaction glycerol + ATP = sn-glycerol 3-phosphate + ADP + H(+). It participates in polyol metabolism; glycerol degradation via glycerol kinase pathway; sn-glycerol 3-phosphate from glycerol: step 1/1. With respect to regulation, inhibited by fructose 1,6-bisphosphate (FBP). Functionally, key enzyme in the regulation of glycerol uptake and metabolism. Catalyzes the phosphorylation of glycerol to yield sn-glycerol 3-phosphate. The sequence is that of Glycerol kinase from Shewanella sp. (strain MR-4).